Reading from the N-terminus, the 335-residue chain is Deoxyhypusine hydroxylase (335 aa).

HEAT-like PBS-type repeat units follow at residues 71–97 (LKHE…VVKD), 104–130 (CRHE…LRDN), 200–233 (QRYR…GLKD), 238–264 (FRHE…ALSD), and 271–298 (VRHE…FLND). Fe cation is bound by residues histidine 73, glutamate 74, histidine 106, and glutamate 107. 4 residues coordinate Fe cation: histidine 240, glutamate 241, histidine 273, and glutamate 274.

Belongs to the deoxyhypusine hydroxylase family. It depends on Fe(2+) as a cofactor.

It is found in the cytoplasm. Its subcellular location is the nucleus. The enzyme catalyses [eIF5A protein]-deoxyhypusine + AH2 + O2 = [eIF5A protein]-hypusine + A + H2O. It participates in protein modification; eIF5A hypusination. Functionally, catalyzes the hydroxylation of the N(6)-(4-aminobutyl)-L-lysine intermediate to form hypusine, an essential post-translational modification only found in mature eIF-5A factor. The chain is Deoxyhypusine hydroxylase (lia1) from Aspergillus clavatus (strain ATCC 1007 / CBS 513.65 / DSM 816 / NCTC 3887 / NRRL 1 / QM 1276 / 107).